Here is a 591-residue protein sequence, read N- to C-terminus: Aspartate--tRNA ligase (591 aa).

Residue Glu171 coordinates L-aspartate. The segment at 195 to 198 (QLFK) is aspartate. Arg217 is an L-aspartate binding site. Residues 217 to 219 (RDE) and Gln226 each bind ATP. His448 serves as a coordination point for L-aspartate. Glu482 is a binding site for ATP. Position 489 (Arg489) interacts with L-aspartate. 534–537 (GLDR) contributes to the ATP binding site.

It belongs to the class-II aminoacyl-tRNA synthetase family. Type 1 subfamily. In terms of assembly, homodimer.

It localises to the cytoplasm. It catalyses the reaction tRNA(Asp) + L-aspartate + ATP = L-aspartyl-tRNA(Asp) + AMP + diphosphate. Functionally, catalyzes the attachment of L-aspartate to tRNA(Asp) in a two-step reaction: L-aspartate is first activated by ATP to form Asp-AMP and then transferred to the acceptor end of tRNA(Asp). The sequence is that of Aspartate--tRNA ligase from Vibrio cholerae serotype O1 (strain ATCC 39541 / Classical Ogawa 395 / O395).